The primary structure comprises 31 residues: Cyclotide vpub-B (31 aa).

A cross-link (cyclopeptide (Gly-Asn)) is located at residues Gly-1–Asn-31. Intrachain disulfides connect Cys-5–Cys-21, Cys-9–Cys-23, and Cys-14–Cys-28.

It belongs to the cyclotide family. Bracelet subfamily. In terms of processing, this is a cyclic peptide.

Its function is as follows. Probably participates in a plant defense mechanism. In Viola pubescens (Downy yellow violet), this protein is Cyclotide vpub-B.